The following is a 269-amino-acid chain: Hydroxyethylthiazole kinase (269 aa).

Methionine 45 contacts substrate. Residues arginine 121 and threonine 167 each coordinate ATP. Glycine 194 is a substrate binding site.

The protein belongs to the Thz kinase family. It depends on Mg(2+) as a cofactor.

It carries out the reaction 5-(2-hydroxyethyl)-4-methylthiazole + ATP = 4-methyl-5-(2-phosphooxyethyl)-thiazole + ADP + H(+). The protein operates within cofactor biosynthesis; thiamine diphosphate biosynthesis; 4-methyl-5-(2-phosphoethyl)-thiazole from 5-(2-hydroxyethyl)-4-methylthiazole: step 1/1. Functionally, catalyzes the phosphorylation of the hydroxyl group of 4-methyl-5-beta-hydroxyethylthiazole (THZ). The protein is Hydroxyethylthiazole kinase of Bacillus cytotoxicus (strain DSM 22905 / CIP 110041 / 391-98 / NVH 391-98).